A 171-amino-acid polypeptide reads, in one-letter code: Calcium-binding protein F-like (171 aa).

EF-hand domains are found at residues 6 to 41 (KIFE…KMNG), 57 to 80 (IDMD…KAKK), 89 to 124 (AALA…RGYT), and 130 to 159 (DQYL…RRID). Residues aspartate 19, asparagine 21, aspartate 23, serine 25, and aspartate 30 each contribute to the Ca(2+) site. The Ca(2+) site is built by aspartate 102, aspartate 104, aspartate 106, lysine 108, glutamate 113, aspartate 137, aspartate 139, aspartate 141, cysteine 143, and glutamate 148.

This Dictyostelium discoideum (Social amoeba) protein is Calcium-binding protein F-like (cbp12).